Consider the following 466-residue polypeptide: ATP synthase subunit beta (466 aa).

155–162 is an ATP binding site; that stretch reads GGAGVGKT.

The protein belongs to the ATPase alpha/beta chains family. In terms of assembly, F-type ATPases have 2 components, CF(1) - the catalytic core - and CF(0) - the membrane proton channel. CF(1) has five subunits: alpha(3), beta(3), gamma(1), delta(1), epsilon(1). CF(0) has three main subunits: a(1), b(2) and c(9-12). The alpha and beta chains form an alternating ring which encloses part of the gamma chain. CF(1) is attached to CF(0) by a central stalk formed by the gamma and epsilon chains, while a peripheral stalk is formed by the delta and b chains.

It localises to the cell inner membrane. The enzyme catalyses ATP + H2O + 4 H(+)(in) = ADP + phosphate + 5 H(+)(out). In terms of biological role, produces ATP from ADP in the presence of a proton gradient across the membrane. The catalytic sites are hosted primarily by the beta subunits. This Bordetella avium (strain 197N) protein is ATP synthase subunit beta.